The chain runs to 145 residues: Leghemoglobin (145 aa).

The Globin domain occupies 3–145 (GFTEKQEALV…ELAAALKKAF (143 aa)). Y26 and Y31 each carry nitrated tyrosine. Residue H62 coordinates O2. Heme b-binding residues include K65, H93, and K96. Y134 bears the Nitrated tyrosine mark.

This sequence belongs to the plant globin family. As to quaternary structure, monomer. Nitrated in effective nodules and particularly in hypoxic conditions; this mechanism may play a protective role in the symbiosis by buffering toxic peroxynitrite NO(2)(-). Nitration level decrease during nodule senescence. Root nodules.

The protein localises to the cytoplasm. The protein resides in the cytosol. It is found in the nucleus. Its function is as follows. Leghemoglobin that reversibly binds oxygen O(2) through a pentacoordinated heme iron. In root nodules, facilitates the diffusion of oxygen to the bacteroids while preventing the bacterial nitrogenase from being inactivated by buffering dioxygen, nitric oxide and carbon monoxide, and promoting the formation of reactive oxygen species (ROS, e.g. H(2)O(2)). This role is essential for symbiotic nitrogen fixation (SNF). This Psophocarpus tetragonolobus (Winged bean) protein is Leghemoglobin.